A 246-amino-acid chain; its full sequence is Probable site-specific recombinase in afa region (246 aa).

Residues 40-225 (ATPAYLLAPE…FALDMAATLA (186 aa)) form the Tyr recombinase domain. Active-site residues include R75, K102, H177, R180, and H203. Y212 functions as the O-(3'-phospho-DNA)-tyrosine intermediate in the catalytic mechanism.

It belongs to the 'phage' integrase family.

This Escherichia coli protein is Probable site-specific recombinase in afa region (int).